The sequence spans 316 residues: MTRKLKAAIIGSGNIGTDLMIKILRHGKNIEMGAMVGIDPHSDGLARASRMGVATTHEGVEGLTRMPGFAEIDFVFDATSAGAHVKNDAFLRSLKPGIRMIDLTPAAIGPYCIPVVNGDMHLDAPNVNMVTCGGQATIPMVAAVSRVAKVHYGEIIASIASKSAGPGTRANIDEFTETTSKAIEVVGGATKGKAIIIMNPAEPPLIMRDTVYTLSALADEAAIAASVEQMAAAVQSYVPGYRLKQQVQFDRIDTPIRIPGVGNALTGLKTSIFLEVEGAAHYLPAYAGNLDIMTSAGLRTAEHMAERMLATLAVAA.

12–15 contacts NAD(+); that stretch reads SGNI. The Acyl-thioester intermediate role is filled by cysteine 132. Residues 163–171 and asparagine 289 contribute to the NAD(+) site; that span reads SAGPGTRAN.

Belongs to the acetaldehyde dehydrogenase family.

The catalysed reaction is acetaldehyde + NAD(+) + CoA = acetyl-CoA + NADH + H(+). This Comamonas testosteroni (Pseudomonas testosteroni) protein is Acetaldehyde dehydrogenase 3 (mhpF).